The chain runs to 419 residues: MSQLVDRRLSGKNRSAVNRQRFLRRFKAQIRKAAAQAVSGRKVADLERGEKISIPSKDLSEPIFHHGPGGRRNVILPGNREFVSGDRIDRPAGEGGGGSGGSPDGEGMDDFVFELSKEEFMDYFFEDLALPDMVKKQLAAVPEVKKSRAGFVSHGNPANLHVVRSMKQAIGRRLAMAAGPREALRQAEEALEALVAEGRGAEPDAEALREEIAALKARVAAVPFIDTWDLRYAHRVDQPVPSSQAVMFCLLDVSGSMDEDRKNIAKRFFMLLYLFLTKSYERIDVVFIRHHTVAKEVDEEEFFSSRESGGTVVSSALELMRDIILARYPTSNWNIYAAQASDGDNWDDDSPRCRDLLLQSILPLTQYFAYVEIEAEEPQSLWREYERVKAASPRFAMQRILALEDIYPVFRELFRKKAA.

The disordered stretch occupies residues 85–108 (GDRIDRPAGEGGGGSGGSPDGEGM). Positions 93 to 104 (GEGGGGSGGSPD) are enriched in gly residues.

Belongs to the UPF0229 family.

This is UPF0229 protein Tbd_1233 from Thiobacillus denitrificans (strain ATCC 25259 / T1).